Here is a 529-residue protein sequence, read N- to C-terminus: Bifunctional purine biosynthesis protein PurH (529 aa).

Residues threonine 2 to valine 149 enclose the MGS-like domain.

This sequence belongs to the PurH family.

The catalysed reaction is (6R)-10-formyltetrahydrofolate + 5-amino-1-(5-phospho-beta-D-ribosyl)imidazole-4-carboxamide = 5-formamido-1-(5-phospho-D-ribosyl)imidazole-4-carboxamide + (6S)-5,6,7,8-tetrahydrofolate. It catalyses the reaction IMP + H2O = 5-formamido-1-(5-phospho-D-ribosyl)imidazole-4-carboxamide. It functions in the pathway purine metabolism; IMP biosynthesis via de novo pathway; 5-formamido-1-(5-phospho-D-ribosyl)imidazole-4-carboxamide from 5-amino-1-(5-phospho-D-ribosyl)imidazole-4-carboxamide (10-formyl THF route): step 1/1. Its pathway is purine metabolism; IMP biosynthesis via de novo pathway; IMP from 5-formamido-1-(5-phospho-D-ribosyl)imidazole-4-carboxamide: step 1/1. This is Bifunctional purine biosynthesis protein PurH from Ruegeria sp. (strain TM1040) (Silicibacter sp.).